Reading from the N-terminus, the 200-residue chain is NADH-quinone oxidoreductase chain 10 (200 aa).

5 helical membrane-spanning segments follow: residues 2-22 (MTFA…MVVI), 26-46 (PVHS…LFVL), 51-71 (FVAM…FLFV), 90-110 (LPLA…AFSG), and 144-164 (VLMF…AIVL).

This sequence belongs to the complex I subunit 6 family. In terms of assembly, NDH-1 is composed of at least 14 different subunits, Nqo1 to Nqo14. The complex has a L-shaped structure, with the hydrophobic arm (subunits Nqo7, Nqo8, Nqo10 to Nqo14) embedded in the inner membrane and the hydrophilic peripheral arm (subunits Nqo1 to Nqo6, Nqo9) protruding into the bacterial cytoplasm. The hydrophilic domain contains all the redox centers.

It is found in the cell inner membrane. The catalysed reaction is a quinone + NADH + 5 H(+)(in) = a quinol + NAD(+) + 4 H(+)(out). Its function is as follows. NDH-1 shuttles electrons from NADH, via FMN and iron-sulfur (Fe-S) centers, to quinones in the respiratory chain. The immediate electron acceptor for the enzyme in this species is believed to be ubiquinone. Couples the redox reaction to proton translocation (for every two electrons transferred, four hydrogen ions are translocated across the cytoplasmic membrane), and thus conserves the redox energy in a proton gradient. The chain is NADH-quinone oxidoreductase chain 10 from Paracoccus denitrificans.